The primary structure comprises 62 residues: Conotoxin Gm5.2 (62 aa).

The signal sequence occupies residues 1 to 22 (MRCLPVFVILLLLIASAPSVDA). A propeptide spanning residues 23 to 49 (QPKTKDDVPLAPLHDNIRSTLQTLRKK) is cleaved from the precursor. Ser60 carries the post-translational modification Serine amide.

It belongs to the conotoxin T superfamily. Post-translationally, contains 2 disulfide bonds that can be either 'C1-C3, C2-C4' or 'C1-C4, C2-C3', since these disulfide connectivities have been observed for conotoxins with cysteine framework V (for examples, see AC P0DQQ7 and AC P81755). As to expression, expressed by the venom duct.

It localises to the secreted. The chain is Conotoxin Gm5.2 from Conus gloriamaris (Glory-of-the-Sea cone).